The chain runs to 326 residues: Phenylalanine--tRNA ligase alpha subunit (326 aa).

E251 contributes to the Mg(2+) binding site.

Belongs to the class-II aminoacyl-tRNA synthetase family. Phe-tRNA synthetase alpha subunit type 1 subfamily. In terms of assembly, tetramer of two alpha and two beta subunits. Requires Mg(2+) as cofactor.

The protein resides in the cytoplasm. The catalysed reaction is tRNA(Phe) + L-phenylalanine + ATP = L-phenylalanyl-tRNA(Phe) + AMP + diphosphate + H(+). This Pseudoalteromonas atlantica (strain T6c / ATCC BAA-1087) protein is Phenylalanine--tRNA ligase alpha subunit.